A 490-amino-acid polypeptide reads, in one-letter code: MSDLTTRTAAELAQQIHAREISSVEVTQAHLDRIAEVDGELNAFLHVAGERALEAAAAVDAALAAGEAPASPLAGVPLALKDVFTTTDMPTTCASKILEGWMSPYDATVTTKLRAAGIPILGKTNMDEFAMGSSTENSAYGPTRNPWDTTRIPGGSGGGSAAALASRQAPLAIGTDTGGSIRQPAAVTATVGTKPTYGTVSRYGLVACASSLDQGGPCGRTVLDTALLHEVIAGYDPRDSTSRDVPVPPVVEAARRGAAGDLRGVKVGVVKELHSDSYQPGVLASFDAAVAVLKDLGAEVVEVSCPHFEYGLPSYYLVMPSEVSSNLARFDAMRYGLRVGDDGTHSAEQVMAMTRAAGFGPEVKRRIMIGTYALSAGYYDEYYGQALKVRTLIARDFDRAYEQVDVLVSPTSPFTPWKLGEKVDDPLAMYLSDLCTLPTNLAGHPAMSVPSGLSKDDGMPVGLQIMAPALADDRLYRVGAAYEAARGPIA.

Residues lysine 81 and serine 156 each act as charge relay system in the active site. The Acyl-ester intermediate role is filled by serine 180.

The protein belongs to the amidase family. GatA subfamily. In terms of assembly, heterotrimer of A, B and C subunits.

It carries out the reaction L-glutamyl-tRNA(Gln) + L-glutamine + ATP + H2O = L-glutaminyl-tRNA(Gln) + L-glutamate + ADP + phosphate + H(+). In terms of biological role, allows the formation of correctly charged Gln-tRNA(Gln) through the transamidation of misacylated Glu-tRNA(Gln) in organisms which lack glutaminyl-tRNA synthetase. The reaction takes place in the presence of glutamine and ATP through an activated gamma-phospho-Glu-tRNA(Gln). The protein is Glutamyl-tRNA(Gln) amidotransferase subunit A of Nocardia farcinica (strain IFM 10152).